A 2033-amino-acid chain; its full sequence is Major viral transcription factor ICP4 homolog (2033 aa).

Over residues 1 to 16 (MFWHQPRQQQLRQLQR) the composition is skewed to low complexity. Disordered regions lie at residues 1–47 (MFWH…PPSP), 95–145 (FSDP…LPAP), 157–199 (LSSS…GSSY), 218–240 (PPRS…ADRC), 277–301 (DQSP…CVGE), 313–338 (EERK…ESLP), 350–461 (AEIN…GAVA), 505–527 (SFAQ…ARQR), 719–747 (LPPD…ASRT), 1015–1064 (GKQS…GALN), 1085–1186 (LLSD…PGDP), 1294–1342 (ETWR…EGGT), 1420–1451 (ASPH…RDAA), 1531–1612 (VVFP…PPAA), 1636–1655 (RFDE…GGKP), 1664–1718 (LCEQ…SPSP), and 1746–2033 (EISP…GTER). A compositionally biased stretch (low complexity) spans 157-173 (LSSSSPSGSSRGSVTSP). Over residues 223–240 (PDCRRGEPVSEDGMADRC) the composition is skewed to basic and acidic residues. A compositionally biased stretch (basic and acidic residues) spans 313 to 326 (EERKEAARRSPDAE). Positions 359-368 (ESDEAEDEDA) are enriched in acidic residues. Positions 507–518 (AQRQQPRQQQHA) are enriched in low complexity. Over residues 732–741 (KSRGGRGGGS) the composition is skewed to gly residues. A compositionally biased stretch (low complexity) spans 1031–1056 (RATASSPRTPASRPPHGSAAAPPSGR). The segment covering 1086–1097 (LSDEAGTDDDGD) has biased composition (acidic residues). A compositionally biased stretch (low complexity) spans 1169 to 1181 (SSSSFASSSLASA). Residues 1294-1303 (ETWRDAEDHP) are compositionally biased toward basic and acidic residues. Basic and acidic residues predominate over residues 1575 to 1591 (SHDRSPSSSSRRRDGRP). Residues 1592–1602 (SSRRRPSRRMS) are compositionally biased toward basic residues. Composition is skewed to basic and acidic residues over residues 1752–1765 (RRRD…GCRQ) and 1774–1795 (EGGR…DSVP). Residues 1812 to 1843 (SAGRSSSSSSSSSSSSSSSPSSRPSRSATPSL) show a composition bias toward low complexity. Residues 1853-1869 (APVDRSRSGRRRERDRP) show a composition bias toward basic and acidic residues. Residues 1912-1921 (TPSSATTLPS) show a composition bias toward polar residues. The span at 1927–1936 (DSVDETETED) shows a compositional bias: acidic residues. Low complexity predominate over residues 1937-1948 (SAPPARLAPSPL).

The protein belongs to the herpesviridae ICP4 family. A long stretch of serine residues may be a major site of phosphorylation.

The protein localises to the host nucleus. Functionally, this IE protein is a multifunctional protein capable of migrating to the nucleus, binding to DNA, trans-activating other viral genes, and autoregulating its own synthesis. It is required for the switch from immediate-early to early mode of gene expression. The protein is Major viral transcription factor ICP4 homolog (ICP4B) of Amazona oratrix (yellow-headed parrot).